The chain runs to 321 residues: Thioredoxin reductase (321 aa).

36 to 43 is an FAD binding site; it reads TGMEKGGQ. Cys-136 and Cys-139 are oxidised to a cystine. 287–296 serves as a coordination point for FAD; sequence DVMDHIYRQA.

Belongs to the class-II pyridine nucleotide-disulfide oxidoreductase family. Homodimer. Requires FAD as cofactor.

It is found in the cytoplasm. The enzyme catalyses [thioredoxin]-dithiol + NADP(+) = [thioredoxin]-disulfide + NADPH + H(+). This Escherichia coli O157:H7 protein is Thioredoxin reductase (trxB).